The primary structure comprises 356 residues: Holliday junction branch migration complex subunit RuvB (356 aa).

Residues 4-190 (TDKLAAERII…FGIVARLEFY (187 aa)) are large ATPase domain (RuvB-L). ATP-binding positions include Leu29, Arg30, Gly71, Lys74, Thr75, Thr76, 137–139 (EDY), Arg180, Tyr190, and Arg227. Residue Thr75 coordinates Mg(2+). The tract at residues 191 to 261 (DAEQLSRIVR…VADAALAMLD (71 aa)) is small ATPAse domain (RuvB-S). The tract at residues 264-356 (PVGFDLMDRK…NLWDTPDAEC (93 aa)) is head domain (RuvB-H). The DNA site is built by Arg300, Arg319, and Arg324.

The protein belongs to the RuvB family. Homohexamer. Forms an RuvA(8)-RuvB(12)-Holliday junction (HJ) complex. HJ DNA is sandwiched between 2 RuvA tetramers; dsDNA enters through RuvA and exits via RuvB. An RuvB hexamer assembles on each DNA strand where it exits the tetramer. Each RuvB hexamer is contacted by two RuvA subunits (via domain III) on 2 adjacent RuvB subunits; this complex drives branch migration. In the full resolvosome a probable DNA-RuvA(4)-RuvB(12)-RuvC(2) complex forms which resolves the HJ.

It localises to the cytoplasm. It catalyses the reaction ATP + H2O = ADP + phosphate + H(+). Functionally, the RuvA-RuvB-RuvC complex processes Holliday junction (HJ) DNA during genetic recombination and DNA repair, while the RuvA-RuvB complex plays an important role in the rescue of blocked DNA replication forks via replication fork reversal (RFR). RuvA specifically binds to HJ cruciform DNA, conferring on it an open structure. The RuvB hexamer acts as an ATP-dependent pump, pulling dsDNA into and through the RuvAB complex. RuvB forms 2 homohexamers on either side of HJ DNA bound by 1 or 2 RuvA tetramers; 4 subunits per hexamer contact DNA at a time. Coordinated motions by a converter formed by DNA-disengaged RuvB subunits stimulates ATP hydrolysis and nucleotide exchange. Immobilization of the converter enables RuvB to convert the ATP-contained energy into a lever motion, pulling 2 nucleotides of DNA out of the RuvA tetramer per ATP hydrolyzed, thus driving DNA branch migration. The RuvB motors rotate together with the DNA substrate, which together with the progressing nucleotide cycle form the mechanistic basis for DNA recombination by continuous HJ branch migration. Branch migration allows RuvC to scan DNA until it finds its consensus sequence, where it cleaves and resolves cruciform DNA. The chain is Holliday junction branch migration complex subunit RuvB from Burkholderia pseudomallei (strain 668).